Here is a 214-residue protein sequence, read N- to C-terminus: Riboflavin kinase (214 aa).

A disordered region spans residues M1–S26. The Mg(2+) site is built by T44 and N46. E112 (nucleophile) is an active-site residue.

It belongs to the flavokinase family. Zn(2+) serves as cofactor. It depends on Mg(2+) as a cofactor.

It carries out the reaction riboflavin + ATP = FMN + ADP + H(+). The protein operates within cofactor biosynthesis; FMN biosynthesis; FMN from riboflavin (ATP route): step 1/1. Its function is as follows. Catalyzes the phosphorylation of riboflavin (vitamin B2) to form flavin mononucleotide (FMN) coenzyme. This is Riboflavin kinase (fmn1) from Aspergillus clavatus (strain ATCC 1007 / CBS 513.65 / DSM 816 / NCTC 3887 / NRRL 1 / QM 1276 / 107).